The chain runs to 202 residues: Nucleoside triphosphate pyrophosphatase (202 aa).

Aspartate 79 (proton acceptor) is an active-site residue.

The protein belongs to the Maf family. The cofactor is a divalent metal cation.

Its subcellular location is the cytoplasm. It carries out the reaction a ribonucleoside 5'-triphosphate + H2O = a ribonucleoside 5'-phosphate + diphosphate + H(+). It catalyses the reaction a 2'-deoxyribonucleoside 5'-triphosphate + H2O = a 2'-deoxyribonucleoside 5'-phosphate + diphosphate + H(+). Nucleoside triphosphate pyrophosphatase. May have a dual role in cell division arrest and in preventing the incorporation of modified nucleotides into cellular nucleic acids. This chain is Nucleoside triphosphate pyrophosphatase, found in Nitrobacter winogradskyi (strain ATCC 25391 / DSM 10237 / CIP 104748 / NCIMB 11846 / Nb-255).